A 452-amino-acid polypeptide reads, in one-letter code: tRNA modification GTPase MnmE (452 aa).

Positions 21, 78, and 118 each coordinate (6S)-5-formyl-5,6,7,8-tetrahydrofolate. In terms of domain architecture, TrmE-type G spans 214–375; sequence GMKVVIAGRP…LREHLKQSMG (162 aa). Asn224 contacts K(+). GTP contacts are provided by residues 224-229, 243-249, 268-271, and 333-336; these read NAGKSS, TDIAGTT, DTAG, and NKAD. Mg(2+) is bound at residue Ser228. K(+)-binding residues include Thr243, Ile245, and Thr248. Thr249 is a Mg(2+) binding site. Residue Lys452 participates in (6S)-5-formyl-5,6,7,8-tetrahydrofolate binding.

It belongs to the TRAFAC class TrmE-Era-EngA-EngB-Septin-like GTPase superfamily. TrmE GTPase family. Homodimer. Heterotetramer of two MnmE and two MnmG subunits. Requires K(+) as cofactor.

Its subcellular location is the cytoplasm. In terms of biological role, exhibits a very high intrinsic GTPase hydrolysis rate. Involved in the addition of a carboxymethylaminomethyl (cmnm) group at the wobble position (U34) of certain tRNAs, forming tRNA-cmnm(5)s(2)U34. This Pasteurella multocida (strain Pm70) protein is tRNA modification GTPase MnmE.